The sequence spans 325 residues: MSEAANWQPSAPISNLLKRADMIKKIRQFFTDRGVLEVDTPCMSQATVTDVHLSTFETRFLAPTMAKSLSLYMTTSPEYHMKRLLAAGSGPIYQMGRCFRNEEMGRYHNPEFTLLEWYRPHYDMYRLMDEVDDLLQQILTCHSAETLSYQQAFLRHLNIDPLSADETQIKEAAVRLNLASITDNEKDRDTFLQLLFMAGVEPYIGRDKPVFIYHFPASQAALASISTEDYRVAERFEVYFKGIELANGFYELTDSAEQQQRFEQDNRQRAALGLPKRSIDERFIAALKHGLPPCSGVALGIDRLVMLSVNAENLSEVMAFPVERA.

Residue 76–78 (SPE) participates in substrate binding. ATP contacts are provided by residues 100–102 (RNE) and N109. Y118 is a substrate binding site. ATP is bound at residue 244 to 245 (EL). E251 contacts substrate. G300 provides a ligand contact to ATP.

It belongs to the class-II aminoacyl-tRNA synthetase family. EpmA subfamily. In terms of assembly, homodimer.

The enzyme catalyses D-beta-lysine + L-lysyl-[protein] + ATP = N(6)-((3R)-3,6-diaminohexanoyl)-L-lysyl-[protein] + AMP + diphosphate + H(+). With EpmB is involved in the beta-lysylation step of the post-translational modification of translation elongation factor P (EF-P). Catalyzes the ATP-dependent activation of (R)-beta-lysine produced by EpmB, forming a lysyl-adenylate, from which the beta-lysyl moiety is then transferred to the epsilon-amino group of a conserved specific lysine residue in EF-P. In Hamiltonella defensa subsp. Acyrthosiphon pisum (strain 5AT), this protein is Elongation factor P--(R)-beta-lysine ligase.